The primary structure comprises 601 residues: Glutathione-regulated potassium-efflux system protein KefB (601 aa).

13 helical membrane-spanning segments follow: residues 5 to 25 (DLLL…PIAA), 29 to 49 (IGAV…GLGF), 55 to 75 (EILH…GLEL), 87 to 107 (IFGI…GLLM), 115 to 135 (AAVV…LQLM), 152 to 172 (VLLF…LLAG), 181 to 201 (LKIG…RYLL), 207 to 227 (FIAG…LVLG), 230 to 250 (LFMD…GILL), 268 to 288 (GLLL…GVLY), 291 to 311 (ILWV…VLYG), 324 to 344 (LPFA…FSSA), and 356 to 376 (ALLL…MKGI). Residues 400–519 (KPQVIIVGFG…AGVKQFSRET (120 aa)) enclose the RCK N-terminal domain.

It belongs to the monovalent cation:proton antiporter 2 (CPA2) transporter (TC 2.A.37) family. KefB subfamily. Interacts with the regulatory subunit KefG.

The protein localises to the cell inner membrane. In terms of biological role, pore-forming subunit of a potassium efflux system that confers protection against electrophiles. Catalyzes K(+)/H(+) antiport. This Cronobacter sakazakii (strain ATCC BAA-894) (Enterobacter sakazakii) protein is Glutathione-regulated potassium-efflux system protein KefB.